The following is a 370-amino-acid chain: Homospermidine synthase 1 (370 aa).

This sequence belongs to the deoxyhypusine synthase family. As to quaternary structure, homotetramer. NAD(+) is required as a cofactor. In terms of processing, the N-terminus is blocked. Expressed in roots.

It catalyses the reaction putrescine + spermidine = sym-homospermidine + propane-1,3-diamine. Its pathway is alkaloid biosynthesis; pyrrolizidine alkaloid biosynthesis. In terms of biological role, catalyzes the transfer of an aminobutyl unit from spermidine onto putrescine. The resulting polyamine homospermidine is a precursor in the biosynthesis of pyrrolizidine alkaloids. The protein is Homospermidine synthase 1 (HSS1) of Senecio vernalis (Spring groundsel).